The sequence spans 465 residues: UDP-N-acetylmuramate--L-alanine ligase (465 aa).

112-118 provides a ligand contact to ATP; the sequence is GTHGKTT.

It belongs to the MurCDEF family.

Its subcellular location is the cytoplasm. It catalyses the reaction UDP-N-acetyl-alpha-D-muramate + L-alanine + ATP = UDP-N-acetyl-alpha-D-muramoyl-L-alanine + ADP + phosphate + H(+). The protein operates within cell wall biogenesis; peptidoglycan biosynthesis. Cell wall formation. The polypeptide is UDP-N-acetylmuramate--L-alanine ligase (Burkholderia multivorans (strain ATCC 17616 / 249)).